Consider the following 289-residue polypeptide: MDVTWTVKYITEFVGTALLIIMGNGAVANVELKGTKAHAQSWMIIGWGYGLGVMLPAVAFGNITSQINPAFTLGLAASGLFPWAHVAQYIIAQVLGAMFGQLLIVMVYRPYYLKTQNPNAILGTFSTIDNVDDNSEKTRLGATINGFLNEFLGSFVLFFGAVAATNIFFGSQSITWMTNYLKGQGADVSSSDVMNQIWVQASGASASKMIAHLFLGFLVMGLVVALGGPTGPGLNPARDFGPRLVHSLLPKSVLGEAKGSSKWWYAWVPVLAPILASLAAVALFKMIYL.

2 helical membrane passes run 10 to 30 and 41 to 61; these read ITEFVGTALLIIMGNGAVANV and SWMIIGWGYGLGVMLPAVAFG. The NPA 1 motif lies at 68–70; the sequence is NPA. The next 3 membrane-spanning stretches (helical) occupy residues 87-107, 151-171, and 209-229; these read AQYIIAQVLGAMFGQLLIVMV, FLGSFVLFFGAVAATNIFFGS, and MIAHLFLGFLVMGLVVALGGP. The NPA 2 motif lies at 235–237; the sequence is NPA. The helical transmembrane segment at 264-284 threads the bilayer; that stretch reads WYAWVPVLAPILASLAAVALF.

This sequence belongs to the MIP/aquaporin (TC 1.A.8) family.

Its subcellular location is the cell membrane. Its function is as follows. Mixed channel protein that transports both water and glycerol. This is Glycerol facilitator-aquaporin gla (gla) from Lactococcus lactis subsp. cremoris (Streptococcus cremoris).